Here is a 53-residue protein sequence, read N- to C-terminus: Conotoxin Cal9.2e (53 aa).

A propeptide spanning residues 1–6 (KKGVTQ) is cleaved from the precursor. Disulfide bonds link Cys-15/Cys-32, Cys-20/Cys-42, and Cys-22/Cys-47.

In terms of tissue distribution, expressed by the venom duct.

The protein resides in the secreted. Its function is as follows. Probable neurotoxin with unknown target. Possibly targets ion channels. The protein is Conotoxin Cal9.2e of Californiconus californicus (California cone).